The chain runs to 681 residues: DNA-directed RNA polymerase subunit beta' (681 aa).

Zn(2+)-binding residues include Cys-69, Cys-71, Cys-87, and Cys-90. Positions 489, 491, and 493 each coordinate Mg(2+).

It belongs to the RNA polymerase beta' chain family. RpoC1 subfamily. In plastids the minimal PEP RNA polymerase catalytic core is composed of four subunits: alpha, beta, beta', and beta''. When a (nuclear-encoded) sigma factor is associated with the core the holoenzyme is formed, which can initiate transcription. Requires Mg(2+) as cofactor. It depends on Zn(2+) as a cofactor.

It is found in the plastid. The protein localises to the chloroplast. The catalysed reaction is RNA(n) + a ribonucleoside 5'-triphosphate = RNA(n+1) + diphosphate. Its function is as follows. DNA-dependent RNA polymerase catalyzes the transcription of DNA into RNA using the four ribonucleoside triphosphates as substrates. The sequence is that of DNA-directed RNA polymerase subunit beta' from Cycas taitungensis (Prince sago).